Reading from the N-terminus, the 945-residue chain is METVEIRSKSLLIQWLTVESNSLLSWQLHVKRKSIKFDIYHKKNDTSSLLDGSNKNTDRSILHTKRQHTHEAGIKKLSAAGLELFYQGERCMSEKPSEGSVYIENGGLYAFVFDNTFSKTKPKTVTFLLTAQPYNGPRIPNASVHGSPKQIISGTLLKKRRKKGQGYARRYFTLNMVEGTISYYANENSSVMRGKIPLSIAVISVAAETHEINVDSGVELWNLRAHTHQDWLRWCNALEKAKNSQTSSKLVVDERTQESSSNQLVSIYSRLRECLDIAQLYRTSRIKSASSHNFSVPEIRIQLPGDAKENKETRTSVEITAAENAQAAVTLRKVTRQLGSLLHELECFIQHHEYTKERTAQSSPSSRMSMDSNFEQHWYDAEDYESTTSQLNHYSESGAHAADATKSSVAHNEKVEDISDSDIPIMKTSSNSTSLDADRDSDTSSISDTSSNSSAPHEQLNATSLASTVDESSRSPPLPEVESNKENDIKRKQPFHDLMDSSSPDDSSFANAKSDEEVQKPSVSKNIADGAVISIPKPLTPKPSDSNSLYPLPHSKVGRRKNIPAITVPPPSILSILRKNIGKDISSIPAPVVSNEPCNLLQRCAEDLEYSNMLDKANECDDDIKIFYVAAFAVSNFSNMRHKERSVRKVFSPLLGETFELVREDRNYRFLAEKVCHRPLIIACHAESRNWIWNHSPKPIQKFWGKSVELNTLGPVTIKLACGTEFSFMKPACFLKNVAIGEKYVEPYDHMEIVDETTGDKAVIRFKSGGMFSGRSEDVLVTVIRSNGEEDPKCLQGKWTSHLDFVNTDEGNVIERIWEVGPLVDKPEDHCGMTVFAAQMNEITDLEKDKLPPTDTRLRPDQRYRENNDLDHAEPLKLELEQKQRERRKEMEEKDIKWEPRWFVPSVAGDDEDEDGSGPIWQLKKENNYWESRENSTWSSCPKLW.

Residues 1–131 form the GOLD domain; it reads METVEIRSKS…PKTVTFLLTA (131 aa). One can recognise a PH domain in the interval 149–243; it reads KQIISGTLLK…WCNALEKAKN (95 aa). Phosphoserine is present on residues S288, S419, and S421. 2 disordered regions span residues 396–555 and 846–894; these read ESGA…LPHS and LEKD…MEEK. Over residues 443-454 the composition is skewed to low complexity; the sequence is TSSISDTSSNSS. A compositionally biased stretch (polar residues) spans 460-470; that stretch reads LNATSLASTVD. Basic and acidic residues predominate over residues 482 to 499; sequence ESNKENDIKRKQPFHDLM. At S503 the chain carries Phosphoserine.

It belongs to the OSBP family.

The protein resides in the cytoplasm. The chain is Oxysterol-binding protein homolog C23H4.01c from Schizosaccharomyces pombe (strain 972 / ATCC 24843) (Fission yeast).